The chain runs to 634 residues: MTNSNLRTENHFDYVKITLASPERVMEWGQRTLPNGQVVGEVTKPETINYRTLKPEMDGLFCEKIFGPSKDWECHCGKYKRVRHRGIVCERCGVEVTESRVRRHRMGFIKLAAPVSHVWYLKGIPSYVAILLDMPLRDVEQIVYFNCYVVLDPGDHKDLKYKQLLTEDEWLEIEDEIYAEESEIENEPVVGIGAEALKQLLEDLSLEEVAQQLREDINGSKGQKRAKLIKRLRVIDNFIATGARPDWMVLDVIPVIPPDLRPMVQLDGGRFATSDLNDLYRRVINRNNRLARLQEILAPEIIVRNEKRMLQEAVDALIDNGRRGRTVVGANNRPLKSLSDIIEGKQGRFRQNLLGKRVDYSGRSVIVVGPKLKMHQCGLPKEMAIELFQPFVIHRLIRQNIVNNIKAAKKLIQRADDEVMQVLQEVIDGHPIMLNRAPTLHRLGIQAFEPKLVDGRAIQLHPLVCPAFNADFDGDQMAVHVPLAIEAQTEARMLMLASNNILSPATGEPIITPSQDMVLGSYYLTALQPDATQPEFGDRSATFAGLDDVIHAFDDTRIGLHDWVWVRFNGEVEDDDELQEPLKSETLSDGTRIEQWTYRRDRFDEEGALISRYVLTTVGRVVMNHTIIDAVASA.

Zn(2+)-binding residues include Cys-74, Cys-76, Cys-89, and Cys-92. Asp-471, Asp-473, and Asp-475 together coordinate Mg(2+).

Belongs to the RNA polymerase beta' chain family. RpoC1 subfamily. In terms of assembly, in cyanobacteria the RNAP catalytic core is composed of 2 alpha, 1 beta, 1 beta', 1 gamma and 1 omega subunit. When a sigma factor is associated with the core the holoenzyme is formed, which can initiate transcription. Mg(2+) is required as a cofactor. Zn(2+) serves as cofactor.

The catalysed reaction is RNA(n) + a ribonucleoside 5'-triphosphate = RNA(n+1) + diphosphate. Its function is as follows. DNA-dependent RNA polymerase catalyzes the transcription of DNA into RNA using the four ribonucleoside triphosphates as substrates. The sequence is that of DNA-directed RNA polymerase subunit gamma from Synechococcus sp. (strain CC9902).